The chain runs to 234 residues: Sugar fermentation stimulation protein A (234 aa).

Positions 201 to 220 (LLSEAQNKGVEVLAYKAELS) form a DNA-binding region, H-T-H motif.

The protein belongs to the SfsA family.

Functionally, binds to DNA non-specifically. Could be a regulatory factor involved in maltose metabolism. The chain is Sugar fermentation stimulation protein A from Salmonella arizonae (strain ATCC BAA-731 / CDC346-86 / RSK2980).